A 505-amino-acid chain; its full sequence is 2,3-bisphosphoglycerate-independent phosphoglycerate mutase (505 aa).

Asp-13 and Ser-63 together coordinate Mn(2+). Ser-63 serves as the catalytic Phosphoserine intermediate. Substrate contacts are provided by residues His-124, 153–154 (RD), Arg-183, Arg-189, 254–257 (RADR), and Lys-330. Mn(2+)-binding residues include Asp-396, His-400, Asp-437, His-438, and His-456.

This sequence belongs to the BPG-independent phosphoglycerate mutase family. In terms of assembly, monomer. Requires Mn(2+) as cofactor.

It carries out the reaction (2R)-2-phosphoglycerate = (2R)-3-phosphoglycerate. Its pathway is carbohydrate degradation; glycolysis; pyruvate from D-glyceraldehyde 3-phosphate: step 3/5. Catalyzes the interconversion of 2-phosphoglycerate and 3-phosphoglycerate. The chain is 2,3-bisphosphoglycerate-independent phosphoglycerate mutase from Ruegeria pomeroyi (strain ATCC 700808 / DSM 15171 / DSS-3) (Silicibacter pomeroyi).